Reading from the N-terminus, the 1305-residue chain is Contactin-associated protein-like 5 (1305 aa).

Positions 1–22 are cleaved as a signal peptide; sequence MDSPALGAVALLLAGFWHLGLT. The F5/8 type C domain maps to 23-174; the sequence is ATNYNCDGAL…IGLRVEVFGC (152 aa). At 23 to 1236 the chain is on the extracellular side; the sequence is ATNYNCDGAL…PLTNAVRSDS (1214 aa). Laminin G-like domains are found at residues 180 to 360 and 367 to 544; these read IADF…TFSC and PITF…IDLC. Intrachain disulfides connect Cys-329/Cys-360, Cys-512/Cys-544, Cys-550/Cys-561, Cys-555/Cys-570, and Cys-572/Cys-582. The EGF-like 1 domain occupies 546–583; it reads IKDRCLPNYCEHGGKCSQSWTTFYCDCNDTSYMGATCH. The Fibrinogen C-terminal domain occupies 584–790; that stretch reads NSIYEQSCEA…LHCYGDRQFW (207 aa). The Laminin G-like 3 domain maps to 791 to 956; sequence NAASFNTEAS…KMTPGVKPGC (166 aa). Intrachain disulfides connect Cys-929–Cys-956, Cys-960–Cys-973, Cys-967–Cys-982, Cys-984–Cys-994, and Cys-1163–Cys-1198. The 39-residue stretch at 957-995 folds into the EGF-like 2 domain; it reads PGHCSSYGNLCHNGGKCVEKYNGYSCDCTSSAYEGPFCK. The Laminin G-like 4 domain maps to 1017–1198; the sequence is PVTKNASTSS…VKGSLTESSC (182 aa). Residues 1237-1257 traverse the membrane as a helical segment; sequence AVIGGVIAVVIFIIFCIIAIM. The Cytoplasmic portion of the chain corresponds to 1258–1305; that stretch reads SRFLYQHKQAHRSSQTKEKEYPENLESSFKADIDLQNTVSECKREYFI.

Belongs to the neurexin family. Expressed in brain.

The protein localises to the membrane. Its function is as follows. May play a role in the correct development and proper functioning of the peripheral and central nervous system and be involved in cell adhesion and intercellular communication. This Gallus gallus (Chicken) protein is Contactin-associated protein-like 5 (CNTNAP5).